Reading from the N-terminus, the 170-residue chain is Cathelicidin antimicrobial peptide (170 aa).

Residues 1 to 30 (MKTQRDGHSLGWWSLVLLLLGLVMPLAIIA) form the signal peptide. The propeptide at 31–131 (QVLSYKEAVL…DISCDKDNKR (101 aa)) is cathelin-like domain (CLD). Cystine bridges form between C86/C97 and C108/C125. Positions 150 to 162 (SKRIVQRIKDFLR) are active core.

The protein belongs to the cathelicidin family. In terms of assembly, monomer, homodimer or homotrimer (in vitro). Oligomerizes as tetra- or hexamer in solution (in vitro). Post-translationally, proteolytically cleaved by proteinase PRTN3 into antibacterial peptide LL-37. Proteolytically cleaved by cathepsin CTSG and neutrophil elastase ELANE. Resistant to proteolytic degradation in solution, and when bound to both zwitterionic (mimicking mammalian membranes) and negatively charged membranes (mimicking bacterial membranes). In terms of processing, after secretion onto the skin surface, the CAMP gene product is processed by a serine protease-dependent mechanism into multiple novel antimicrobial peptides distinct from and shorter than cathelicidin LL-37. These peptides show enhanced antimicrobial action, acquiring the ability to kill skin pathogens such as S.aureus, E.coli and C.albicans. These peptides have lost the ability to stimulate CXCL8/IL8 release from keratinocytes. The peptides act synergistically, killing bacteria at lower concentrations when present together, and maintain activity at increased salt condition.

The protein localises to the secreted. It localises to the vesicle. In terms of biological role, antimicrobial protein that is an integral component of the innate immune system. Binds to bacterial lipopolysaccharides (LPS). Acts via neutrophil N-formyl peptide receptors to enhance the release of CXCL2. Postsecretory processing generates multiple cathelicidin antimicrobial peptides with various lengths which act as a topical antimicrobial defense in sweat on skin. The unprocessed precursor form, cathelicidin antimicrobial peptide, inhibits the growth of Gram-negative E.coli and E.aerogenes with efficiencies comparable to that of the mature peptide LL-37 (in vitro). Its function is as follows. Antimicrobial peptide that is an integral component of the innate immune system. Binds to bacterial lipopolysaccharides (LPS). Causes membrane permeabilization by forming transmembrane pores (in vitro). Causes lysis of E.coli. Exhibits antimicrobial activity against Gram-negative bacteria such as P.aeruginosa, S.typhimurium, E.aerogenes, E.coli and P.syringae, Gram-positive bacteria such as L.monocytogenes, S.epidermidis, S.pyogenes and S.aureus, as well as vancomycin-resistant enterococci (in vitro). Exhibits antimicrobial activity against methicillin-resistant S.aureus, P.mirabilis, and C.albicans in low-salt media, but not in media containing 100 mM NaCl (in vitro). Forms chiral supramolecular assemblies with quinolone signal (PQS) molecules of P.aeruginosa, which may lead to interference of bacterial quorum signaling and perturbance of bacterial biofilm formation. May form supramolecular fiber-like assemblies on bacterial membranes. Induces cytokine and chemokine producation as well as TNF/TNFA and CSF2/GMCSF production in normal human keratinocytes. Exhibits hemolytic activity against red blood cells. Exhibits antimicrobial activity against E.coli and B.megaterium (in vitro). This is Cathelicidin antimicrobial peptide from Gorilla gorilla gorilla (Western lowland gorilla).